The chain runs to 208 residues: Ribosome maturation factor RimP (208 aa).

The interval 175-208 is disordered; sequence GEDVEDLVADPGADDELDELDELDELDDGDEDEQ. Positions 177-208 are enriched in acidic residues; it reads DVEDLVADPGADDELDELDELDELDDGDEDEQ.

The protein belongs to the RimP family.

The protein localises to the cytoplasm. Required for maturation of 30S ribosomal subunits. The sequence is that of Ribosome maturation factor RimP from Kineococcus radiotolerans (strain ATCC BAA-149 / DSM 14245 / SRS30216).